We begin with the raw amino-acid sequence, 739 residues long: Adenosylcobalamin-dependent ribonucleoside-triphosphate reductase (739 aa).

Cysteine 119 and cysteine 419 are joined by a disulfide. Positions 147–158 (SMPFSFLFDELM) are effector region-1. The effector region-2 stretch occupies residues 168 to 313 (ARSNISQIPR…ICNLIGKAVV (146 aa)). Residues cysteine 408 and glutamate 410 contribute to the active site. The tract at residues 565 to 626 (FHYGAYLIQR…NPNFASAGTV (62 aa)) is adenosylcobalamin-binding-1. The adenosylcobalamin-binding-2 stretch occupies residues 685–724 (LQQAPKEPIDKETYEKRSQEITGNVEEVFSQLNSDVKDLE).

It belongs to the class II ribonucleoside-triphosphate reductase family. As to quaternary structure, monomer. Adenosylcob(III)alamin is required as a cofactor.

It carries out the reaction a 2'-deoxyribonucleoside 5'-triphosphate + [thioredoxin]-disulfide + H2O = a ribonucleoside 5'-triphosphate + [thioredoxin]-dithiol. Allosterically regulated by ATP and dNTP. The sequence is that of Adenosylcobalamin-dependent ribonucleoside-triphosphate reductase (rtpR) from Lactobacillus leichmannii.